A 356-amino-acid polypeptide reads, in one-letter code: CMP-sialic acid transporter 2 (356 aa).

The segment covering 1 to 24 has biased composition (basic and acidic residues); that stretch reads MEYRRVKDQESYDVVSQKDIESPG. The interval 1–44 is disordered; it reads MEYRRVKDQESYDVVSQKDIESPGERSLSSTSATSSLSTAGASK. The Cytoplasmic segment spans residues 1 to 52; that stretch reads MEYRRVKDQESYDVVSQKDIESPGERSLSSTSATSSLSTAGASKGKNSWKLK. The span at 27 to 44 shows a compositional bias: low complexity; sequence SLSSTSATSSLSTAGASK. The helical transmembrane segment at 53 to 73 threads the bilayer; sequence SIVTLALTLLTSSQAILIVWS. Residues 74–82 are Lumenal-facing; that stretch reads KRAGKYEYS. Residues 83–103 form a helical membrane-spanning segment; that stretch reads VTTANFSVEALKCLLSLIALY. Topologically, residues 104-125 are cytoplasmic; sequence RTWNSQGVTEDNRLSTSFDEVS. The chain crosses the membrane as a helical span at residues 126 to 146; the sequence is VYPIPAILYMVKNLLQYYIFA. Over 147 to 149 the chain is Lumenal; sequence YVD. A helical transmembrane segment spans residues 150-172; sequence APAYQILKNLNIISTGVLYRIIL. Topologically, residues 173-175 are cytoplasmic; sequence KKK. Residues 176 to 196 traverse the membrane as a helical segment; that stretch reads LSEIQWAAFILLCAGCTTAQL. Over 197–211 the chain is Lumenal; that stretch reads NPSSDHVLQTPIQGW. The chain crosses the membrane as a helical span at residues 212 to 232; the sequence is VMAIVMALLSGFAGVYTEAII. The Cytoplasmic segment spans residues 233–239; the sequence is KKRPSRN. Residues 240 to 260 traverse the membrane as a helical segment; the sequence is INVQNFWLYIFGMLFNLVAIC. Over 261-277 the chain is Lumenal; that stretch reads VQDFDAVMNKGFFHGYS. The helical transmembrane segment at 278–298 threads the bilayer; that stretch reads FITVLMILNHALSGIAVSMVM. At 299–314 the chain is on the cytoplasmic side; it reads KYADNIVKVYSTSVAM. Residues 315–335 traverse the membrane as a helical segment; that stretch reads LLTAVVSVFLFGFHLSLAFFL. At 336–356 the chain is on the lumenal side; it reads GSTVVSVSVYLHSVGKPQPQK.

The protein belongs to the nucleotide-sugar transporter family. CMP-Sialate:CMP antiporter (TC 2.A.7.12) subfamily. In terms of tissue distribution, expressed in roots, leaves and stalks.

It localises to the golgi apparatus membrane. Functionally, sugar transporter involved in the transport of CMP-sialic acid from the cytoplasm into the Golgi. May transport important nucleotide sugars such as CMP-Kdo (2-keto-3-deoxy-D-manno-octulosonic acid) in physiological conditions. This chain is CMP-sialic acid transporter 2, found in Oryza sativa subsp. japonica (Rice).